The primary structure comprises 1349 residues: Protein turtle homolog B (1349 aa).

The N-terminal stretch at Met-1 to Ala-20 is a signal peptide. Over Glu-21–Pro-722 the chain is Extracellular. 5 Ig-like domains span residues His-24 to Ser-129, Pro-139 to Gln-226, Pro-228 to Thr-320, Pro-324 to Val-415, and Pro-420 to Thr-504. 2 disulfide bridges follow: Cys-45-Cys-113 and Cys-161-Cys-208. 2 N-linked (GlcNAc...) asparagine glycosylation sites follow: Asn-241 and Asn-258. 3 cysteine pairs are disulfide-bonded: Cys-250-Cys-303, Cys-346-Cys-397, and Cys-442-Cys-488. 2 consecutive Fibronectin type-III domains span residues Ala-512–Phe-604 and Leu-614–Ile-708. Asn-624 is a glycosylation site (N-linked (GlcNAc...) asparagine). Residues Val-723–Leu-743 traverse the membrane as a helical segment. Residues Ala-744–Leu-1349 are Cytoplasmic-facing. Disordered regions lie at residues Arg-758–Leu-817, Gln-911–Pro-1081, and Ala-1099–Leu-1349. A phosphoserine mark is found at Ser-775, Ser-783, and Ser-794. Polar residues predominate over residues Gln-911–Ser-921. The segment covering Val-985–Ser-998 has biased composition (low complexity). 3 stretches are compositionally biased toward polar residues: residues Glu-1018–Gly-1033, Leu-1129–Gly-1141, and Ser-1199–Gly-1214. Arg-1136 is subject to Omega-N-methylarginine. 2 positions are modified to phosphoserine: Ser-1207 and Ser-1215. Low complexity predominate over residues Ser-1251–Pro-1271. Over residues Pro-1283–Ala-1292 the composition is skewed to pro residues.

The protein belongs to the immunoglobulin superfamily. Turtle family. In terms of assembly, found in a complex with MAGI2 and NLGN2, where it interacts with MAGI2 (via PDZ 5 and PDZ 6 domains). In terms of processing, N-glycosylated and sialylated. Not significantly O-glycosylated.

It is found in the postsynaptic cell membrane. The protein localises to the postsynaptic density. Transmembrane protein which is abundantly expressed in interneurons, where it may regulate inhibitory synapse development. May mediate homophilic cell adhesion. This is Protein turtle homolog B (IGSF9B) from Homo sapiens (Human).